A 510-amino-acid polypeptide reads, in one-letter code: Sphingolipid C9-methyltransferase B (510 aa).

Asn-55 carries N-linked (GlcNAc...) asparagine glycosylation. The next 2 membrane-spanning stretches (helical) occupy residues 62 to 82 (LLGG…GGGA) and 84 to 104 (TFVF…WTYA). A glycan (N-linked (GlcNAc...) asparagine) is linked at Asn-175. Residues 227-228 (YT), 264-272 (MLDIGCGWG), 290-295 (TIAENQ), and 320-321 (YR) contribute to the S-adenosyl-L-methionine site. Residue Asn-294 is glycosylated (N-linked (GlcNAc...) asparagine).

The protein belongs to the CFA/CMAS family.

It localises to the membrane. It catalyses the reaction a (4E,8E)-4-sphinga-4,8-dienine ceramide + S-adenosyl-L-methionine = a 9-methyl-(4E,8E)-sphinga-4,8-dienine ceramide + S-adenosyl-L-homocysteine + H(+). The protein operates within lipid metabolism; sphingolipid metabolism. Catalyzes methylation of the sphingoid base component of glucosylceramides (GluCers) at the C9-position. Sphingolipid C9-methylation requires 4,8-desaturated ceramides as substrates. Glucosylceramides play important roles in growth, differentiation and pathogenicity. The methyl group at the C9-position distinguishes fungal glucosylceramides from those of plants and animals and may thus play a role in host-pathogen interactions enabling the host to recognize the fungal attack and initiate specific defense responses. The sequence is that of Sphingolipid C9-methyltransferase B from Emericella nidulans (strain FGSC A4 / ATCC 38163 / CBS 112.46 / NRRL 194 / M139) (Aspergillus nidulans).